The chain runs to 333 residues: NADH-quinone oxidoreductase subunit H (333 aa).

Transmembrane regions (helical) follow at residues 15–35, 88–108, 117–137, 159–179, 191–211, 239–259, 272–294, and 313–333; these read FFIF…FVTY, FILA…VIPF, IGVG…GVVT, ISYE…AGSL, VWYI…AVAE, WAFF…LITV, GFIP…LIWF, and ILLP…ELFF.

It belongs to the complex I subunit 1 family. As to quaternary structure, NDH-1 is composed of 14 different subunits. Subunits NuoA, H, J, K, L, M, N constitute the membrane sector of the complex.

The protein localises to the cell membrane. It carries out the reaction a quinone + NADH + 5 H(+)(in) = a quinol + NAD(+) + 4 H(+)(out). NDH-1 shuttles electrons from NADH, via FMN and iron-sulfur (Fe-S) centers, to quinones in the respiratory chain. The immediate electron acceptor for the enzyme in this species is believed to be ubiquinone. Couples the redox reaction to proton translocation (for every two electrons transferred, four hydrogen ions are translocated across the cytoplasmic membrane), and thus conserves the redox energy in a proton gradient. This subunit may bind ubiquinone. The sequence is that of NADH-quinone oxidoreductase subunit H from Bacillus mycoides (strain KBAB4) (Bacillus weihenstephanensis).